We begin with the raw amino-acid sequence, 362 residues long: 3-dehydroquinate synthase (362 aa).

Residues 71–76 (DGEQYK), 105–109 (GVVGD), 129–130 (TT), Lys142, Lys151, and 169–172 (CLKT) each bind NAD(+). Glu184, His247, and His264 together coordinate Zn(2+).

This sequence belongs to the sugar phosphate cyclases superfamily. Dehydroquinate synthase family. Co(2+) is required as a cofactor. The cofactor is Zn(2+). It depends on NAD(+) as a cofactor.

Its subcellular location is the cytoplasm. The catalysed reaction is 7-phospho-2-dehydro-3-deoxy-D-arabino-heptonate = 3-dehydroquinate + phosphate. The protein operates within metabolic intermediate biosynthesis; chorismate biosynthesis; chorismate from D-erythrose 4-phosphate and phosphoenolpyruvate: step 2/7. Functionally, catalyzes the conversion of 3-deoxy-D-arabino-heptulosonate 7-phosphate (DAHP) to dehydroquinate (DHQ). The protein is 3-dehydroquinate synthase of Escherichia coli O81 (strain ED1a).